Here is a 551-residue protein sequence, read N- to C-terminus: Serine beta-lactamase-like protein LACTB, mitochondrial (551 aa).

The transit peptide at 1 to 113 (MYRLLSSVTA…RAIESSRDLL (113 aa)) directs the protein to the mitochondrion. The disordered stretch occupies residues 69 to 101 (PADPEASGTTELSHEQALSPGSPHTPAPPAARG). The Acyl-ester intermediate role is filled by S162. Positions 237–287 (LKMVKGTPPPSDQEKELKEKGGKNNEKSDAPKAKVEQDSEARCRSAKPGKK) are disordered. The span at 248 to 279 (DQEKELKEKGGKNNEKSDAPKAKVEQDSEARC) shows a compositional bias: basic and acidic residues. An N6-succinyllysine mark is found at K287 and K288. 2 positions are modified to N6-acetyllysine: K301 and K346.

The protein belongs to the peptidase S12 family. In terms of tissue distribution, expressed predominantly in liver.

The protein localises to the mitochondrion. Its function is as follows. Mitochondrial serine protease that acts as a regulator of mitochondrial lipid metabolism. Acts by decreasing protein levels of PISD, a mitochondrial enzyme that converts phosphatidylserine (PtdSer) to phosphatidylethanolamine (PtdEtn), thereby affecting mitochondrial lipid metabolism. It is unclear whether it acts directly by mediating proteolysis of PISD or by mediating proteolysis of another lipid metabolism protein. Acts as a tumor suppressor that has the ability to inhibit proliferation of multiple types of cancer cells: probably by promoting decreased levels of PISD, thereby affecting mitochondrial lipid metabolism. In Mus musculus (Mouse), this protein is Serine beta-lactamase-like protein LACTB, mitochondrial.